A 1620-amino-acid chain; its full sequence is uncharacterized protein (1620 aa).

The Ubiquitin-like domain maps to 21-96; the sequence is IRVTLKTLDD…VHLVDRGPSG (76 aa). Disordered stretches follow at residues 621 to 648, 791 to 810, 842 to 874, 950 to 1016, 1219 to 1260, and 1537 to 1620; these read VATT…GTSR, TASS…SQSD, RQFL…SEDA, QVVS…NPGH, RVPG…ADPR, and IAST…NNIQ. The span at 799 to 810 shows a compositional bias: acidic residues; it reads ESVDGVEESQSD. Residues 852–871 show a composition bias toward polar residues; it reads PSTSSAPSTSENPPGPSFNS. Residues 1225-1242 are compositionally biased toward polar residues; that stretch reads ATRNASQNTTSVNQSTET. Low complexity-rich tracts occupy residues 1537 to 1556 and 1583 to 1620; these read IAST…TVST and TSLS…NNIQ.

This is an uncharacterized protein from Caenorhabditis elegans.